Here is a 740-residue protein sequence, read N- to C-terminus: Platelet endothelial cell adhesion molecule (740 aa).

The signal sequence occupies residues 1-27 (MRLRWTQGGNMWLGVLLTLQLCSSLEG). The Extracellular portion of the chain corresponds to 28–602 (QENSFTINSI…VRVYLAPWKK (575 aa)). 3 Ig-like C2-type domains span residues 35–126 (NSIH…YKVV), 145–223 (GGVV…DSVR), and 236–315 (PKFH…SKVS). N-linked (GlcNAc...) asparagine glycosylation is found at N52 and N84. Disulfide bonds link C57–C109, C152–C206, and C256–C304. N284, N301, N320, N357, N372, N436, N456, and N552 each carry an N-linked (GlcNAc...) asparagine glycan. Ig-like C2-type domains follow at residues 328–404 (PKLK…VQIA), 425–494 (GQTI…KVLR), and 500–592 (PVEE…NILA). Intrachain disulfides connect C347-C387, C432-C477, and C524-C573. A helical transmembrane segment spans residues 603–621 (GLIAVVVIAVIIAVLLLGA). Residues 622–740 (RFYFLKKSKA…SRTEGSLDGT (119 aa)) are Cytoplasmic-facing. 2 consecutive short sequence motifs (ITIM motif) follow at residues 690–695 (VEYTEV) and 713–718 (TVYSEI). Phosphotyrosine; by FER is present on residues Y692 and Y715. The segment at 697-740 (VTSPEPHRGLGTKGTETVYSEIRKADPDLVENRYSRTEGSLDGT) is disordered. Positions 711–731 (TETVYSEIRKADPDLVENRYS) are membrane-bound segment which detaches upon phosphorylation. Residues 717–732 (EIRKADPDLVENRYSR) show a composition bias toward basic and acidic residues. The interval 723-740 (PDLVENRYSRTEGSLDGT) is may play a role in cytoprotective signaling. Phosphoserine occurs at positions 731 and 736.

In terms of assembly, trans-homodimer (via Ig-like C2-type 1 and Ig-like C2-type 2 domains); trans-homodimerization is required for cell-cell interaction. Forms a complex with BDKRB2 and GNAQ. Interacts with BDKRB2 and GNAQ. Interacts with PTPN11; Tyr-715 is critical for PTPN11 recruitment. Interacts with FER. Interacts with CD177; the interaction is Ca(2+)-dependent; the interaction is direct. Post-translationally, phosphorylated on Ser and Tyr residues by src kinases after cellular activation. Upon activation, phosphorylated on Ser-731 which probably initiates the dissociation of the membrane-interaction segment (residues 711-731) from the cell membrane allowing the sequential phosphorylation of Tyr-715 and Tyr-692. Constitutively phosphorylated on Ser-736 in resting platelets. Phosphorylated on tyrosine residues by FER and FES in response to FCER1 activation. In endothelial cells Fyn mediates mechanical-force (stretch or pull) induced tyrosine phosphorylation. Palmitoylation by ZDHHC21 is necessary for cell surface expression in endothelial cells and enrichment in membrane rafts.

It is found in the cell membrane. The protein resides in the membrane raft. It localises to the cell junction. Cell adhesion molecule which is required for leukocyte transendothelial migration (TEM) under most inflammatory conditions. Tyr-692 plays a critical role in TEM and is required for efficient trafficking of PECAM1 to and from the lateral border recycling compartment (LBRC) and is also essential for the LBRC membrane to be targeted around migrating leukocytes. Trans-homophilic interaction may play a role in endothelial cell-cell adhesion via cell junctions. Heterophilic interaction with CD177 plays a role in transendothelial migration of neutrophils. Homophilic ligation of PECAM1 prevents macrophage-mediated phagocytosis of neighboring viable leukocytes by transmitting a detachment signal. Promotes macrophage-mediated phagocytosis of apoptotic leukocytes by tethering them to the phagocytic cells; PECAM1-mediated detachment signal appears to be disabled in apoptotic leukocytes. Modulates bradykinin receptor BDKRB2 activation. Regulates bradykinin- and hyperosmotic shock-induced ERK1/2 activation in endothelial cells. Induces susceptibility to atherosclerosis. The polypeptide is Platelet endothelial cell adhesion molecule (PECAM1) (Sus scrofa (Pig)).